The sequence spans 353 residues: Vomeronasal type-1 receptor 1 (353 aa).

Residues 1 to 56 (MVGDTLKLLSPLMTRYFFLLFYSTDSSDLNENQHPLDFDEMAFGKVKSGISFLIQT) lie on the Extracellular side of the membrane. Residues 57-77 (GVGILGNSFLLCFYNLILFTG) form a helical membrane-spanning segment. The Cytoplasmic segment spans residues 78-84 (HKLRPTD). A helical transmembrane segment spans residues 85–105 (LILSHLALANSMVLFFKGIPQ). Topologically, residues 106-132 (TMAAFGLKYLLNDTGCKFVFYYHRVGT) are extracellular. The N-linked (GlcNAc...) asparagine glycan is linked to asparagine 117. Residues 133-153 (RVSLSTICLLNGFQAIKLNPS) form a helical membrane-spanning segment. The Cytoplasmic segment spans residues 154-169 (ICRWMEIKIRSPRFID). Residues 170–190 (FCCLLCWVPHVLMNASVLLLV) traverse the membrane as a helical segment. Over 191-226 (NGPLNSKNSSAKNNYGYCSYKASKRFSSLHAVLYFS) the chain is Extracellular. Asparagine 198 carries N-linked (GlcNAc...) asparagine glycosylation. A helical membrane pass occupies residues 227–247 (PDFMSLGFMVWASGSMVFFLY). The Cytoplasmic portion of the chain corresponds to 248-274 (RHKQQVQHNHSNRLSCRPSQETRATRT). A helical membrane pass occupies residues 275–295 (IMVLVSSFFVFYSVHSFLTIW). Residues 296–303 (TTVVANPG) lie on the Extracellular side of the membrane. Residues 304 to 324 (QWIVNNSVLVASYFPSRSPFV) traverse the membrane as a helical segment. Topologically, residues 325–353 (LIMSDTRISQFCFACRTRKTLFPNLVVMP) are cytoplasmic.

Belongs to the G-protein coupled receptor 1 family.

The protein localises to the cell membrane. In terms of biological role, putative pheromone receptor. The protein is Vomeronasal type-1 receptor 1 (VN1R1) of Gorilla gorilla gorilla (Western lowland gorilla).